Reading from the N-terminus, the 85-residue chain is Polcalcin Aln g 4 (85 aa).

EF-hand domains are found at residues 7-42 (QDQA…LGSV) and 45-77 (DEVK…NRGL). The Ca(2+) site is built by Asp-20, Asn-22, Asp-24, Lys-26, Glu-31, Asp-55, Asp-57, Asp-59, and Glu-66.

The sequence is that of Polcalcin Aln g 4 from Alnus glutinosa (European alder).